Reading from the N-terminus, the 172-residue chain is Ribosome maturation factor RimM (172 aa).

The PRC barrel domain maps to 97–170 (ENEFYFHEII…KITIEVMEGL (74 aa)).

Belongs to the RimM family. Binds ribosomal protein uS19.

The protein localises to the cytoplasm. In terms of biological role, an accessory protein needed during the final step in the assembly of 30S ribosomal subunit, possibly for assembly of the head region. Essential for efficient processing of 16S rRNA. May be needed both before and after RbfA during the maturation of 16S rRNA. It has affinity for free ribosomal 30S subunits but not for 70S ribosomes. In Listeria innocua serovar 6a (strain ATCC BAA-680 / CLIP 11262), this protein is Ribosome maturation factor RimM.